The chain runs to 407 residues: Phospholipid-transporting ATPase accessory subunit CDC50 (407 aa).

The interval 1-33 (MAPRRRRGAGQDGSDDGRSDSDAPKNRPPNTAF) is disordered. Over 1-48 (MAPRRRRGAGQDGSDDGRSDSDAPKNRPPNTAFRQQRMRAWQCVLTPK) the chain is Cytoplasmic. Over residues 15–25 (DDGRSDSDAPK) the composition is skewed to basic and acidic residues. Residues 49–69 (LIVTVFSILAAIYLGFGAWLT) form a helical membrane-spanning segment. Residues 70–359 (YLAHTVRDLK…TMGSRNIWPG (290 aa)) are Extracellular-facing. A disulfide bridge connects residues Cys85 and Cys139. Asn131 and Asn189 each carry an N-linked (GlcNAc...) asparagine glycan. Cys193 and Cys210 are disulfide-bonded. 4 N-linked (GlcNAc...) asparagine glycosylation sites follow: Asn219, Asn232, Asn241, and Asn314. A helical transmembrane segment spans residues 360–380 (IIFLIVGGICLVLDIYFILSF). Over 381 to 407 (FIWRPRKLGDPSYLSWNQPSAPGGHSS) the chain is Cytoplasmic.

It belongs to the CDC50/LEM3 family. Component of a flippase complex consisting of DNF1 and CDC50. Interacts with DNF1; the interaction is direct.

The protein localises to the cell membrane. Its function is as follows. Accessory component of a P4-ATPase flippase complex which catalyzes the hydrolysis of ATP coupled to the transport of phosphatidylcholine and phosphatidylserine from the lumen to the cytosolic leaflet of membranes and ensures the maintenance of asymmetric distribution of phospholipids. In Chaetomium thermophilum (strain DSM 1495 / CBS 144.50 / IMI 039719) (Thermochaetoides thermophila), this protein is Phospholipid-transporting ATPase accessory subunit CDC50.